A 157-amino-acid polypeptide reads, in one-letter code: MKTPLITREGYETLKQELNYLWREERPEVTKKVTWAASLGDRSENADYQYNKKRLREIDRRVRYLTKCMENLKIVDYSPQQEGKVFFGAWVEIENDDGDRLKFRIVGYDEIFGRKDYISIDSPMARALLKKEVGDLAVVNTPVGEANWYVNAIEYVK.

Belongs to the GreA/GreB family. GreB subfamily.

Functionally, necessary for efficient RNA polymerase transcription elongation past template-encoded arresting sites. The arresting sites in DNA have the property of trapping a certain fraction of elongating RNA polymerases that pass through, resulting in locked ternary complexes. Cleavage of the nascent transcript by cleavage factors such as GreA or GreB allows the resumption of elongation from the new 3'terminus. GreB releases sequences of up to 9 nucleotides in length. This chain is Transcription elongation factor GreB, found in Salmonella typhimurium (strain LT2 / SGSC1412 / ATCC 700720).